A 765-amino-acid polypeptide reads, in one-letter code: 5-methyltetrahydropteroyltriglutamate--homocysteine methyltransferase 2 (765 aa).

2 residues coordinate 5-methyltetrahydropteroyltri-L-glutamate: Lys-18 and Asn-116. L-homocysteine is bound by residues Ile-437–Ser-439 and Glu-490. Residues Ile-437–Ser-439 and Glu-490 contribute to the L-methionine site. 5-methyltetrahydropteroyltri-L-glutamate-binding positions include Asp-495, Tyr-518, Arg-521–Cys-522, and Trp-567. Residue Asp-605 coordinates L-homocysteine. Position 605 (Asp-605) interacts with L-methionine. Zn(2+) contacts are provided by His-647, Cys-649, His-658, Asp-662, and Glu-671. Catalysis depends on His-701, which acts as the Proton donor. Cys-733 contributes to the Zn(2+) binding site.

The protein belongs to the vitamin-B12 independent methionine synthase family. Zn(2+) is required as a cofactor. As to expression, expressed in leaves, stems and siliques.

Its subcellular location is the cytoplasm. The protein localises to the cytosol. The enzyme catalyses 5-methyltetrahydropteroyltri-L-glutamate + L-homocysteine = tetrahydropteroyltri-L-glutamate + L-methionine. It functions in the pathway amino-acid biosynthesis; L-methionine biosynthesis via de novo pathway; L-methionine from L-homocysteine (MetE route): step 1/1. Functionally, catalyzes the transfer of a methyl group from 5-methyltetrahydrofolate to homocysteine resulting in methionine formation. The polypeptide is 5-methyltetrahydropteroyltriglutamate--homocysteine methyltransferase 2 (MS2) (Arabidopsis thaliana (Mouse-ear cress)).